The following is a 111-amino-acid chain: Cytochrome b-c1 complex subunit 7 (111 aa).

The residue at position 2 (A2) is an N-acetylalanine. Residue K12 is modified to N6-acetyllysine; alternate. K12 carries the post-translational modification N6-succinyllysine; alternate. At K19 the chain carries N6-acetyllysine. An N6-acetyllysine; alternate modification is found at K78. K78 is modified (N6-succinyllysine; alternate). 2 positions are modified to N6-acetyllysine: K83 and K96.

This sequence belongs to the UQCRB/QCR7 family. In terms of assembly, component of the ubiquinol-cytochrome c oxidoreductase (cytochrome b-c1 complex, complex III, CIII), a multisubunit enzyme composed of 11 subunits. The complex is composed of 3 respiratory subunits cytochrome b, cytochrome c1 and Rieske protein UQCRFS1, 2 core protein subunits UQCRC1/QCR1 and UQCRC2/QCR2, and 6 low-molecular weight protein subunits UQCRH/QCR6, UQCRB/QCR7, UQCRQ/QCR8, UQCR10/QCR9, UQCR11/QCR10 and subunit 9, the cleavage product of Rieske protein UQCRFS1. The complex exists as an obligatory dimer and forms supercomplexes (SCs) in the inner mitochondrial membrane with NADH-ubiquinone oxidoreductase (complex I, CI) and cytochrome c oxidase (complex IV, CIV), resulting in different assemblies (supercomplex SCI(1)III(2)IV(1) and megacomplex MCI(2)III(2)IV(2)).

The protein localises to the mitochondrion inner membrane. Component of the ubiquinol-cytochrome c oxidoreductase, a multisubunit transmembrane complex that is part of the mitochondrial electron transport chain which drives oxidative phosphorylation. The respiratory chain contains 3 multisubunit complexes succinate dehydrogenase (complex II, CII), ubiquinol-cytochrome c oxidoreductase (cytochrome b-c1 complex, complex III, CIII) and cytochrome c oxidase (complex IV, CIV), that cooperate to transfer electrons derived from NADH and succinate to molecular oxygen, creating an electrochemical gradient over the inner membrane that drives transmembrane transport and the ATP synthase. The cytochrome b-c1 complex catalyzes electron transfer from ubiquinol to cytochrome c, linking this redox reaction to translocation of protons across the mitochondrial inner membrane, with protons being carried across the membrane as hydrogens on the quinol. In the process called Q cycle, 2 protons are consumed from the matrix, 4 protons are released into the intermembrane space and 2 electrons are passed to cytochrome c. This chain is Cytochrome b-c1 complex subunit 7 (UQCRB), found in Homo sapiens (Human).